The primary structure comprises 478 residues: ATP-dependent DNA helicase RecQ (478 aa).

Residues 28–202 (IDCLLARRDC…VEGLNLRSPE (175 aa)) enclose the Helicase ATP-binding domain. 41 to 48 (LPTGGGKS) provides a ligand contact to ATP. Residues 142–145 (DEAH) carry the DEAH box motif. The region spanning 229-380 (QLRRFLLKHL…RAEVLSQQIP (152 aa)) is the Helicase C-terminal domain. Zn(2+)-binding residues include cysteine 447, cysteine 467, cysteine 470, and cysteine 473.

Belongs to the helicase family. RecQ subfamily. Mg(2+) is required as a cofactor. Zn(2+) serves as cofactor.

The catalysed reaction is Couples ATP hydrolysis with the unwinding of duplex DNA by translocating in the 3'-5' direction.. The enzyme catalyses ATP + H2O = ADP + phosphate + H(+). An ATP-dependent DNA helicase which unwinds DNA in a 3'-5' direction. The sequence is that of ATP-dependent DNA helicase RecQ from Synechocystis sp. (strain ATCC 27184 / PCC 6803 / Kazusa).